A 418-amino-acid chain; its full sequence is NADH-quinone oxidoreductase subunit D (418 aa).

This sequence belongs to the complex I 49 kDa subunit family. NDH-1 is composed of 14 different subunits. Subunits NuoB, C, D, E, F, and G constitute the peripheral sector of the complex.

The protein localises to the cell inner membrane. The enzyme catalyses a quinone + NADH + 5 H(+)(in) = a quinol + NAD(+) + 4 H(+)(out). Its function is as follows. NDH-1 shuttles electrons from NADH, via FMN and iron-sulfur (Fe-S) centers, to quinones in the respiratory chain. The immediate electron acceptor for the enzyme in this species is believed to be ubiquinone. Couples the redox reaction to proton translocation (for every two electrons transferred, four hydrogen ions are translocated across the cytoplasmic membrane), and thus conserves the redox energy in a proton gradient. In Neisseria meningitidis serogroup C (strain 053442), this protein is NADH-quinone oxidoreductase subunit D.